Consider the following 206-residue polypeptide: dITP/XTP pyrophosphatase (206 aa).

7–12 (SSHGYK) is a binding site for substrate. Asp70 serves as the catalytic Proton acceptor. A Mg(2+)-binding site is contributed by Asp70. Substrate-binding positions include Thr71, 154–157 (FGYD), Lys177, and 182–183 (HR).

Belongs to the HAM1 NTPase family. As to quaternary structure, homodimer. Requires Mg(2+) as cofactor.

It carries out the reaction XTP + H2O = XMP + diphosphate + H(+). The catalysed reaction is dITP + H2O = dIMP + diphosphate + H(+). It catalyses the reaction ITP + H2O = IMP + diphosphate + H(+). Its function is as follows. Pyrophosphatase that catalyzes the hydrolysis of nucleoside triphosphates to their monophosphate derivatives, with a high preference for the non-canonical purine nucleotides XTP (xanthosine triphosphate), dITP (deoxyinosine triphosphate) and ITP. Seems to function as a house-cleaning enzyme that removes non-canonical purine nucleotides from the nucleotide pool, thus preventing their incorporation into DNA/RNA and avoiding chromosomal lesions. In Chlamydia abortus (strain DSM 27085 / S26/3) (Chlamydophila abortus), this protein is dITP/XTP pyrophosphatase.